The primary structure comprises 257 residues: tRNA (guanine-N(1)-)-methyltransferase (257 aa).

Residues G117 and 137–142 contribute to the S-adenosyl-L-methionine site; that span reads LGDFVL.

This sequence belongs to the RNA methyltransferase TrmD family. As to quaternary structure, homodimer.

The protein resides in the cytoplasm. The catalysed reaction is guanosine(37) in tRNA + S-adenosyl-L-methionine = N(1)-methylguanosine(37) in tRNA + S-adenosyl-L-homocysteine + H(+). Specifically methylates guanosine-37 in various tRNAs. This chain is tRNA (guanine-N(1)-)-methyltransferase, found in Bordetella pertussis (strain Tohama I / ATCC BAA-589 / NCTC 13251).